A 476-amino-acid polypeptide reads, in one-letter code: Adenylosuccinate synthetase, chloroplastic (476 aa).

The span at 1 to 20 (AAAAAGRGRSFSPAAPAPSS) shows a compositional bias: low complexity. Residues 1–34 (AAAAAGRGRSFSPAAPAPSSVRLPGRQAPAPAAA) are disordered. GTP is bound by residues 63 to 69 (GDEGKGK) and 91 to 93 (GHT). Residue aspartate 64 is the Proton acceptor of the active site. The Mg(2+) site is built by aspartate 64 and glycine 91. IMP contacts are provided by residues 64–67 (DEGK), 89–92 (NAGH), threonine 181, arginine 195, glutamine 275, threonine 290, and arginine 354. Residue histidine 92 is the Proton donor of the active site. Position 350-356 (350-356 (TTTGRPR)) interacts with substrate. Residues arginine 356, 382–384 (KLD), and 465–467 (GVG) each bind GTP.

Belongs to the adenylosuccinate synthetase family. Homodimer. Requires Mg(2+) as cofactor.

The protein resides in the plastid. It localises to the chloroplast. It catalyses the reaction IMP + L-aspartate + GTP = N(6)-(1,2-dicarboxyethyl)-AMP + GDP + phosphate + 2 H(+). It participates in purine metabolism; AMP biosynthesis via de novo pathway; AMP from IMP: step 1/2. Plays an important role in the de novo pathway and in the salvage pathway of purine nucleotide biosynthesis. Catalyzes the first committed step in the biosynthesis of AMP from IMP. In Triticum aestivum (Wheat), this protein is Adenylosuccinate synthetase, chloroplastic.